We begin with the raw amino-acid sequence, 176 residues long: Mitochondrial inner membrane protein Mpv17 (176 aa).

The next 4 membrane-spanning stretches (helical) occupy residues 18 to 38, 53 to 73, 94 to 114, and 131 to 151; these read VQVLTAGSLMGLGDVISQQLV, TMASLGCGFVGPVVGGWYRVL, GGFAPCFLGCFLPLVGTLNGL, and LITNYYLWPAVQLANFYLVPL.

This sequence belongs to the peroxisomal membrane protein PXMP2/4 family.

Its subcellular location is the mitochondrion inner membrane. In terms of biological role, non-selective channel that modulates the membrane potential under normal conditions and oxidative stress, and is involved in mitochondrial homeostasis. Involved in mitochondrial deoxynucleoside triphosphates (dNTP) pool homeostasis and mitochondrial DNA (mtDNA) maintenance. May be involved in the regulation of reactive oxygen species metabolism and the control of oxidative phosphorylation. This chain is Mitochondrial inner membrane protein Mpv17, found in Bos taurus (Bovine).